Here is a 176-residue protein sequence, read N- to C-terminus: 3-hydroxydecanoyl-[acyl-carrier-protein] dehydratase (176 aa).

H75 is a catalytic residue.

This sequence belongs to the thioester dehydratase family. FabA subfamily. In terms of assembly, homodimer.

The protein resides in the cytoplasm. The catalysed reaction is a (3R)-hydroxyacyl-[ACP] = a (2E)-enoyl-[ACP] + H2O. The enzyme catalyses (3R)-hydroxydecanoyl-[ACP] = (2E)-decenoyl-[ACP] + H2O. It catalyses the reaction (2E)-decenoyl-[ACP] = (3Z)-decenoyl-[ACP]. Its pathway is lipid metabolism; fatty acid biosynthesis. Its function is as follows. Necessary for the introduction of cis unsaturation into fatty acids. Catalyzes the dehydration of (3R)-3-hydroxydecanoyl-ACP to E-(2)-decenoyl-ACP and then its isomerization to Z-(3)-decenoyl-ACP. Can catalyze the dehydratase reaction for beta-hydroxyacyl-ACPs with saturated chain lengths up to 16:0, being most active on intermediate chain length. This Haemophilus ducreyi (strain 35000HP / ATCC 700724) protein is 3-hydroxydecanoyl-[acyl-carrier-protein] dehydratase.